A 369-amino-acid chain; its full sequence is MIDYELKQRIDEVKKRYEDIVKVFHPEDKKKELEELEKLMGESDFWNDQKRAKEISQNAQRIRKIIDDMVDIENKLEDLEAGLELLEEDATFLDTIKQLIDDIERKVKTFELELILNEKFDSSNAYLSIHPGAGGTESQDWASMLLRMYMRWAERRGFDVQIVDYQPGEEAGIKSAMLYIKGEYVYGYLKYERGVHRLVRISPFDANKRRHTSFASVNVMPEIEDDIDVEINPEDLRIDTYRASGAGGQYVNKTESAVRITHIPTGIVVTCQTERSQLQNKETAMKVLKARLYQLELEKRQKQLEEIQGELKDISWGNQIRSYVFQPYTMVKDHRTNVETGNIDAVMDGDIDIFIESELIFFAKSKNKK.

An N5-methylglutamine modification is found at Gln249.

It belongs to the prokaryotic/mitochondrial release factor family. Post-translationally, methylated by PrmC. Methylation increases the termination efficiency of RF2.

Its subcellular location is the cytoplasm. Peptide chain release factor 2 directs the termination of translation in response to the peptide chain termination codons UGA and UAA. This chain is Peptide chain release factor 2, found in Thermosipho melanesiensis (strain DSM 12029 / CIP 104789 / BI429).